We begin with the raw amino-acid sequence, 342 residues long: N-acetyl-gamma-glutamyl-phosphate reductase (342 aa).

Residue Cys-149 is part of the active site.

It belongs to the NAGSA dehydrogenase family. Type 1 subfamily.

It localises to the cytoplasm. It catalyses the reaction N-acetyl-L-glutamate 5-semialdehyde + phosphate + NADP(+) = N-acetyl-L-glutamyl 5-phosphate + NADPH + H(+). Its pathway is amino-acid biosynthesis; L-arginine biosynthesis; N(2)-acetyl-L-ornithine from L-glutamate: step 3/4. Functionally, catalyzes the NADPH-dependent reduction of N-acetyl-5-glutamyl phosphate to yield N-acetyl-L-glutamate 5-semialdehyde. This Nitrosospira multiformis (strain ATCC 25196 / NCIMB 11849 / C 71) protein is N-acetyl-gamma-glutamyl-phosphate reductase.